Reading from the N-terminus, the 218-residue chain is Ribose-5-phosphate isomerase A (218 aa).

Substrate is bound by residues 28–31 (TGST), 81–84 (DGAD), and 94–97 (KGGG). Glutamate 103 functions as the Proton acceptor in the catalytic mechanism. Position 121 (lysine 121) interacts with substrate.

This sequence belongs to the ribose 5-phosphate isomerase family. As to quaternary structure, homodimer.

The enzyme catalyses aldehydo-D-ribose 5-phosphate = D-ribulose 5-phosphate. It participates in carbohydrate degradation; pentose phosphate pathway; D-ribose 5-phosphate from D-ribulose 5-phosphate (non-oxidative stage): step 1/1. Its function is as follows. Catalyzes the reversible conversion of ribose-5-phosphate to ribulose 5-phosphate. The sequence is that of Ribose-5-phosphate isomerase A from Vibrio campbellii (strain ATCC BAA-1116).